A 275-amino-acid polypeptide reads, in one-letter code: Diaminopimelate epimerase (275 aa).

Residues Asn12, Gln45, and Asn65 each coordinate substrate. Residue Cys74 is the Proton donor of the active site. Substrate-binding positions include 75–76 (GN), Asn158, Asn191, and 209–210 (ER). Cys218 acts as the Proton acceptor in catalysis. 219–220 (GT) is a binding site for substrate.

Belongs to the diaminopimelate epimerase family. In terms of assembly, homodimer.

Its subcellular location is the cytoplasm. The enzyme catalyses (2S,6S)-2,6-diaminopimelate = meso-2,6-diaminopimelate. It participates in amino-acid biosynthesis; L-lysine biosynthesis via DAP pathway; DL-2,6-diaminopimelate from LL-2,6-diaminopimelate: step 1/1. Functionally, catalyzes the stereoinversion of LL-2,6-diaminopimelate (L,L-DAP) to meso-diaminopimelate (meso-DAP), a precursor of L-lysine and an essential component of the bacterial peptidoglycan. The sequence is that of Diaminopimelate epimerase from Shewanella putrefaciens (strain CN-32 / ATCC BAA-453).